Reading from the N-terminus, the 515-residue chain is MKTKFTKKTVLKFFGILFAILLLSVLILFSVVIGRTFTFKVNRELGQWENTSTIYPYLSPEQREKLLDNFKVAVQIPTVSFSESDQNITALQEFDLLLRRVFPKVFSSSLVRHEVVGNYSHLFTVVGADAGLEPYMLLAHIDVVPANEAGGWDAPPFSAQEIDGFIYGRGTIDNKQSVMGILQALEYLLERGYTPRRTFYIGLGHDEEINGEEGAVKIVNLLKSRGVKLLYVLDEGLTIMDGVVDGLNEPAALIGVSEKGQTTVKLSVSTPPGHSSMPPRESSIGILASAVARLEKNRMPNLFGHGPERATFEHLAHKFGWSYRMIMSNLWLFSSLLSSVLEGQPDTNAFVRTTTAVTMFNSGVKINVMPAHAEAFVNFRIHSSQTVQGVLNRIESTVSDKRVKVEFINGFDPLPIGSYEDDTFGYQIIKKSVQDIFPQVTVTPGICVANTDSRHYTQLSPDIYRFAPSWYKPGDSARFHGVNERISIQNYEEIVLFYFQLMQNSDVRNLPTLRS.

Residues 1-34 (MKTKFTKKTVLKFFGILFAILLLSVLILFSVVIG) form the signal peptide. N50, N87, and N118 each carry an N-linked (GlcNAc...) asparagine glycan. H140 provides a ligand contact to Zn(2+). The active site involves D142. Position 173 (D173) interacts with Zn(2+). E207 (proton acceptor) is an active-site residue. Zn(2+)-binding residues include E208, D234, and H480.

It belongs to the peptidase M20A family. It depends on Zn(2+) as a cofactor.

The protein localises to the secreted. It catalyses the reaction an N-acyl-L-amino acid + H2O = an L-alpha-amino acid + a carboxylate. The catalysed reaction is an N-acyl-aromatic L-alpha-amino acid + H2O = an aromatic L-alpha-amino acid + a carboxylate. It carries out the reaction N-(5Z,8Z,11Z,14Z)-eicosatetraenoyl-glycine + H2O = (5Z,8Z,11Z,14Z)-eicosatetraenoate + glycine. The enzyme catalyses N-hexadecanoyl-L-phenylalanine + H2O = hexadecanoate + L-phenylalanine. It catalyses the reaction N-octadecanoyl-L-phenylalanine + H2O = octadecanoate + L-phenylalanine. The catalysed reaction is N-(4Z,7Z,10Z,13Z,16Z,19Z-docosahexaenoyl)-L-phenylalanine + H2O = (4Z,7Z,10Z,13Z,16Z,19Z)-docosahexaenoate + L-phenylalanine. It carries out the reaction N-(9Z-octadecenoyl)-L-asparagine + H2O = L-asparagine + (9Z)-octadecenoate. The enzyme catalyses (9Z)-octadecenoate + glycine = N-(9Z-octadecenoyl)glycine + H2O. It catalyses the reaction N-(9Z-octadecenoyl)-L-lysine + H2O = L-lysine + (9Z)-octadecenoate. The catalysed reaction is N-(9Z-octadecenoyl)-L-methionine + H2O = (9Z)-octadecenoate + L-methionine. It carries out the reaction N-(9Z-octadecenoyl)-L-serine + H2O = L-serine + (9Z)-octadecenoate. The enzyme catalyses N-(9Z-octadecenoyl)-L-tryptophan + H2O = L-tryptophan + (9Z)-octadecenoate. It catalyses the reaction N-(9Z-octadecenoyl)-L-tyrosine + H2O = L-tyrosine + (9Z)-octadecenoate. The catalysed reaction is N-(9Z-octadecenoyl)-L-glutamine + H2O = L-glutamine + (9Z)-octadecenoate. It carries out the reaction N-(5Z,8Z,11Z,14Z-eicosatetraenoyl)-L-serine + H2O = (5Z,8Z,11Z,14Z)-eicosatetraenoate + L-serine. The enzyme catalyses (5Z,8Z,11Z,14Z)-eicosatetraenoate + L-phenylalanine = N-(5Z,8Z,11Z,14Z-eicosatetraenoyl)-L-phenylalanine + H2O. It catalyses the reaction N-(9Z-octadecenoyl)-L-leucine + H2O = L-leucine + (9Z)-octadecenoate. The catalysed reaction is L-phenylalanine + (9Z)-octadecenoate = N-(9Z-octadecenoyl)-L-phenylalanine + H2O. The protein operates within amino-acid metabolism. It functions in the pathway energy metabolism; electron transfer. It participates in lipid metabolism; fatty acid metabolism. With respect to regulation, lipoproteins are powerful coactivators of PM20D1 activity in vitro and NAA biosynthesis in vivo. In terms of biological role, secreted enzyme that regulates the endogenous N-fatty acyl amino acid (NAAs) tissue and circulating levels by functioning as a bidirectional NAA synthase/hydrolase. It condenses free fatty acids and free amino acids to generate NAAs and bidirectionally catalyzes the reverse hydrolysis reaction. Some of these NAAs stimulate oxidative metabolism via mitochondrial uncoupling, increasing energy expenditure in a UPC1-independent manner. Thereby, this secreted protein may indirectly regulate whole body energy expenditure. PM20D1 circulates in tight association with both low- and high-density (LDL and HDL,respectively) lipoprotein particles. The protein is N-fatty-acyl-amino acid synthase/hydrolase PM20D1.1 of Danio rerio (Zebrafish).